The chain runs to 433 residues: MLMSVSILCLFFLINPYQIMIYLMIMTLFLLAKGLINNAESFINFFFFDLMSLSMVILTVWISILMIMASKSNNNYKNKIFNFYLLLMMNLLFICFMLENLLMFYLFFEAVLFPIILMISGWGSQPERIQAGFYMLMYTVFGSLPLLILMLLKNQSLSIIFNEWLFNEMGFIFFLMILGFLVKIPMFLFHLWLPKAHVEAPRAGSMILAGVLLKLGFYGLYRFKSFFFLDLLKFSFVLIVISMWGAVLISIFCLYQNDIKSLIAYSSVSHMGITLAGCVTFQLHTSFGMLMMMIGHGLCSSGLFCLKNMIYERLHTRSIMMIKGMINFPNLSMWWFLFSIINMSAPMTMNLFGELFLGLGLMKYSLLLSLPVMMMIFLSACYSMFMYSYINHGQSWMIFSNKMISMREYYLMLLHIIPMIMWFLKINFFMKWI.

The next 13 helical transmembrane spans lie at 10 to 30 (LFFL…TLFL), 45 to 65 (FFFF…ISIL), 80 to 100 (IFNF…MLEN), 101 to 121 (LLMF…MISG), 132 to 152 (GFYM…LMLL), 169 to 189 (MGFI…MFLF), 203 to 223 (AGSM…LYRF), 234 to 254 (FSFV…IFCL), 261 to 281 (SLIA…CVTF), 286 to 306 (SFGM…LFCL), 331 to 353 (LSMW…NLFG), 366 to 386 (LLLS…SMFM), and 410 to 430 (YLML…NFFM).

Belongs to the complex I subunit 4 family.

The protein resides in the mitochondrion membrane. The enzyme catalyses a ubiquinone + NADH + 5 H(+)(in) = a ubiquinol + NAD(+) + 4 H(+)(out). Core subunit of the mitochondrial membrane respiratory chain NADH dehydrogenase (Complex I) that is believed to belong to the minimal assembly required for catalysis. Complex I functions in the transfer of electrons from NADH to the respiratory chain. The immediate electron acceptor for the enzyme is believed to be ubiquinone. The sequence is that of NADH-ubiquinone oxidoreductase chain 4 (ND4) from Rhipicephalus sanguineus (Brown dog tick).